Consider the following 117-residue polypeptide: Fluoride-specific ion channel FluC 2 (117 aa).

Transmembrane regions (helical) follow at residues Met-1 to Ile-21 and Phe-46 to Val-66. Residues Gly-71 and Thr-74 each coordinate Na(+). Residues Leu-95–Tyr-115 form a helical membrane-spanning segment.

This sequence belongs to the fluoride channel Fluc/FEX (TC 1.A.43) family.

The protein resides in the cell membrane. It carries out the reaction fluoride(in) = fluoride(out). Its activity is regulated as follows. Na(+) is not transported, but it plays an essential structural role and its presence is essential for fluoride channel function. In terms of biological role, fluoride-specific ion channel. Important for reducing fluoride concentration in the cell, thus reducing its toxicity. The protein is Fluoride-specific ion channel FluC 2 of Staphylococcus aureus (strain MRSA252).